Consider the following 218-residue polypeptide: NAD(P)H-hydrate epimerase (218 aa).

Residues 9–215 (MKKIDQYAID…DIGIPQKAIR (207 aa)) enclose the YjeF N-terminal domain. 55–59 (NNGAD) provides a ligand contact to (6S)-NADPHX. Residues Asn-56 and Asp-127 each contribute to the K(+) site. (6S)-NADPHX contacts are provided by residues 131 to 137 (GTGLNRT) and Asp-160. Position 163 (Ser-163) interacts with K(+).

It belongs to the NnrE/AIBP family. K(+) is required as a cofactor.

The enzyme catalyses (6R)-NADHX = (6S)-NADHX. It catalyses the reaction (6R)-NADPHX = (6S)-NADPHX. Catalyzes the epimerization of the S- and R-forms of NAD(P)HX, a damaged form of NAD(P)H that is a result of enzymatic or heat-dependent hydration. This is a prerequisite for the S-specific NAD(P)H-hydrate dehydratase to allow the repair of both epimers of NAD(P)HX. This Anaerococcus prevotii (strain ATCC 9321 / DSM 20548 / JCM 6508 / NCTC 11806 / PC1) (Peptostreptococcus prevotii) protein is NAD(P)H-hydrate epimerase.